We begin with the raw amino-acid sequence, 176 residues long: Large ribosomal subunit protein uL16 (176 aa).

The protein belongs to the universal ribosomal protein uL16 family.

This chain is Large ribosomal subunit protein uL16, found in Picrophilus torridus (strain ATCC 700027 / DSM 9790 / JCM 10055 / NBRC 100828 / KAW 2/3).